A 254-amino-acid polypeptide reads, in one-letter code: Leucyl/phenylalanyl-tRNA--protein transferase (254 aa).

The segment covering 1-10 (MSSQPPPLPW) has biased composition (pro residues). A disordered region spans residues 1–28 (MSSQPPPLPWLDPNQDFPPTSQAWDENS).

Belongs to the L/F-transferase family.

It is found in the cytoplasm. The catalysed reaction is N-terminal L-lysyl-[protein] + L-leucyl-tRNA(Leu) = N-terminal L-leucyl-L-lysyl-[protein] + tRNA(Leu) + H(+). The enzyme catalyses N-terminal L-arginyl-[protein] + L-leucyl-tRNA(Leu) = N-terminal L-leucyl-L-arginyl-[protein] + tRNA(Leu) + H(+). It carries out the reaction L-phenylalanyl-tRNA(Phe) + an N-terminal L-alpha-aminoacyl-[protein] = an N-terminal L-phenylalanyl-L-alpha-aminoacyl-[protein] + tRNA(Phe). In terms of biological role, functions in the N-end rule pathway of protein degradation where it conjugates Leu, Phe and, less efficiently, Met from aminoacyl-tRNAs to the N-termini of proteins containing an N-terminal arginine or lysine. The sequence is that of Leucyl/phenylalanyl-tRNA--protein transferase from Albidiferax ferrireducens (strain ATCC BAA-621 / DSM 15236 / T118) (Rhodoferax ferrireducens).